Consider the following 333-residue polypeptide: DNA-directed RNA polymerase subunit alpha (333 aa).

Positions 1–234 are alpha N-terminal domain (alpha-NTD); sequence MQISVNEFLT…QQLAAFVDLK (234 aa). Residues 248 to 333 form an alpha C-terminal domain (alpha-CTD) region; it reads IDPILLRPVD…SLKKDDKATA (86 aa).

Belongs to the RNA polymerase alpha chain family. Homodimer. The RNAP catalytic core consists of 2 alpha, 1 beta, 1 beta' and 1 omega subunit. When a sigma factor is associated with the core the holoenzyme is formed, which can initiate transcription.

It carries out the reaction RNA(n) + a ribonucleoside 5'-triphosphate = RNA(n+1) + diphosphate. In terms of biological role, DNA-dependent RNA polymerase catalyzes the transcription of DNA into RNA using the four ribonucleoside triphosphates as substrates. The protein is DNA-directed RNA polymerase subunit alpha of Pseudomonas entomophila (strain L48).